Here is a 184-residue protein sequence, read N- to C-terminus: Photosystem I assembly protein Ycf4 (184 aa).

2 helical membrane passes run 21-43 (NFFW…ISSY) and 58-78 (LFVP…FISS).

This sequence belongs to the Ycf4 family.

It is found in the plastid. The protein resides in the chloroplast thylakoid membrane. Its function is as follows. Seems to be required for the assembly of the photosystem I complex. This chain is Photosystem I assembly protein Ycf4, found in Pinus thunbergii (Japanese black pine).